The chain runs to 629 residues: MPSTRNIETHNDSNPTLRALSLSALGIVYGDIGTSPLYTFKTVILLAGGGTPAVNTIMGSVSLIIWTLIIIASVKYIHFALRIDNDGEGGILALMSLLSLKLKQRPFIIAVGLMGAALIYGDGTITPAISVLSAVEGLEILSPSLKYYVLPIAITILITLFAIQSKGTATIGKAFGPVMAFWFLTIGILGARGVIQHPSVLAAINPIYGLSFLFSNGATGFFILCGVFLCVTGAEALYADLGHFGTAPIRCAWFGLAFPSLIFNYLGQAALVLEGASTEHNIFYMLCPGDFLLPLIILSTVATIIASQAIITGAFSMTRQAMQLGWLPRLRVTQTSSEGYGQIYIGVVNWLLMLATLGLTIGFGSSEKLAAAYGIAVSATMLCTTLLLFIALHKLWKWDIITSGLVAGLFMIVDASFFAANLTKFINGGYIPITLAIIIYSMMYIWHKGYQTIAIKQKEKNITVASFLDSIQKERVVRVPKTAVFLTSKEQDIPPILVWHVKKNHVLQDKVIILKINNLSIPRCKPGDRLQIVETGTGIWHAVANYGFMEQPHIPKLLKKLEAQGYDINIKDITYYIGHETIFVRNVRHTLSKYIKILFVFMHRNALPMSNYFHLPPESVFEIGRQIEI.

12 helical membrane-spanning segments follow: residues 20–40 (LSLS…LYTF), 61–81 (VSLI…HFAL), 106–126 (PFII…GTIT), 143–163 (PSLK…LFAI), 171–191 (IGKA…ILGA), 209–229 (GLSF…GVFL), 253–273 (WFGL…ALVL), 291–311 (FLLP…QAII), 343–363 (IYIG…TIGF), 372–392 (AYGI…FIAL), 400–420 (IITS…FFAA), and 425–445 (FING…MMYI).

Belongs to the HAK/KUP transporter (TC 2.A.72) family.

The protein resides in the cell inner membrane. The catalysed reaction is K(+)(in) + H(+)(in) = K(+)(out) + H(+)(out). Functionally, transport of potassium into the cell. Likely operates as a K(+):H(+) symporter. The protein is Probable potassium transport system protein Kup 3 of Legionella pneumophila subsp. pneumophila (strain Philadelphia 1 / ATCC 33152 / DSM 7513).